Reading from the N-terminus, the 578-residue chain is Arginine--tRNA ligase (578 aa).

The short motif at 127-137 (PNLAKEMHVGH) is the 'HIGH' region element.

The protein belongs to the class-I aminoacyl-tRNA synthetase family. Monomer.

Its subcellular location is the cytoplasm. The catalysed reaction is tRNA(Arg) + L-arginine + ATP = L-arginyl-tRNA(Arg) + AMP + diphosphate. The protein is Arginine--tRNA ligase of Pseudomonas fluorescens (strain Pf0-1).